A 56-amino-acid polypeptide reads, in one-letter code: Prokaryotic ubiquitin-like protein UBact (56 aa).

Basic and acidic residues predominate over residues 1-28; it reads MPQDQQRKKQFDPNPNRDDSQRKTPVDK. Residues 1–33 are disordered; sequence MPQDQQRKKQFDPNPNRDDSQRKTPVDKEIDDI. A Deamidated glutamine modification is found at Gln56. Gln56 is covalently cross-linked (Isoglutamyl lysine isopeptide (Gln-Lys) (interchain with K-? in acceptor proteins)).

Belongs to the ubiquitin-like protein UBact family. May be modified by deamidation of its C-terminal glutamine to glutamate by the adjacently encoded deamidase. This could be a prerequisite to the subsequent conjugation, as shown in the other prokaryotic ubiquitin-like protein Pup.

Its function is as follows. May function as a protein modifier covalently attached to lysine residues of substrate proteins. This may serve to target the modified proteins for degradation by proteasomes. This chain is Prokaryotic ubiquitin-like protein UBact, found in Yanofskybacteria sp. (strain GW2011_GWA1_39_13).